The following is a 459-amino-acid chain: Ribulose bisphosphate carboxylase (459 aa).

Asn-111 contacts substrate. Residue Lys-166 is the Proton acceptor of the active site. Substrate is bound at residue Lys-168. Residues Lys-191, Asp-193, and Glu-194 each contribute to the Mg(2+) site. Lys-191 bears the N6-carboxylysine mark. His-287 functions as the Proton acceptor in the catalytic mechanism. Residues Arg-288, His-321, and Ser-368 each coordinate substrate.

Belongs to the RuBisCO large chain family. Type II subfamily. In terms of assembly, the complex is approximately 350 kDa when isolated from either T.denitrificans or R.sphaeroides, suggesting a homohexamer or homooctamer structure. The cofactor is Mg(2+).

The enzyme catalyses 2 (2R)-3-phosphoglycerate + 2 H(+) = D-ribulose 1,5-bisphosphate + CO2 + H2O. The catalysed reaction is D-ribulose 1,5-bisphosphate + O2 = 2-phosphoglycolate + (2R)-3-phosphoglycerate + 2 H(+). Its function is as follows. RuBisCO catalyzes two reactions: the carboxylation of D-ribulose 1,5-bisphosphate, the primary event in carbon dioxide fixation, as well as the oxidative fragmentation of the pentose substrate. Both reactions occur simultaneously and in competition at the same active site. This is Ribulose bisphosphate carboxylase (cbbM) from Thiobacillus denitrificans (strain ATCC 25259 / T1).